Consider the following 296-residue polypeptide: Polyamine aminopropyltransferase (296 aa).

One can recognise a PABS domain in the interval 16–251 (HLWYFEYYTG…GMWSYTFASK (236 aa)). S-methyl-5'-thioadenosine is bound at residue Gln46. Residues His77 and Asp101 each contribute to the spermidine site. S-methyl-5'-thioadenosine-binding positions include Glu121 and 152–153 (NG). Catalysis depends on Asp170, which acts as the Proton acceptor. Position 170 to 173 (170 to 173 (DSTD)) interacts with spermidine.

The protein belongs to the spermidine/spermine synthase family. Homodimer or homotetramer.

The protein localises to the cytoplasm. It catalyses the reaction S-adenosyl 3-(methylsulfanyl)propylamine + putrescine = S-methyl-5'-thioadenosine + spermidine + H(+). The protein operates within amine and polyamine biosynthesis; spermidine biosynthesis; spermidine from putrescine: step 1/1. Functionally, catalyzes the irreversible transfer of a propylamine group from the amino donor S-adenosylmethioninamine (decarboxy-AdoMet) to putrescine (1,4-diaminobutane) to yield spermidine. The protein is Polyamine aminopropyltransferase of Thermotoga petrophila (strain ATCC BAA-488 / DSM 13995 / JCM 10881 / RKU-1).